The chain runs to 88 residues: MAKEELLELDGVVDEVLPDSRFRVTLENGAVVAAYASGRMRKHRIRILAGDRVKLELSVYDLTKGCINFRHKDERASPGVPRNRFVRR.

The region spanning 1-72 is the S1-like domain; it reads MAKEELLELD…TKGCINFRHK (72 aa).

The protein belongs to the IF-1 family. In terms of assembly, component of the 30S ribosomal translation pre-initiation complex which assembles on the 30S ribosome in the order IF-2 and IF-3, IF-1 and N-formylmethionyl-tRNA(fMet); mRNA recruitment can occur at any time during PIC assembly.

The protein resides in the cytoplasm. Its function is as follows. One of the essential components for the initiation of protein synthesis. Stabilizes the binding of IF-2 and IF-3 on the 30S subunit to which N-formylmethionyl-tRNA(fMet) subsequently binds. Helps modulate mRNA selection, yielding the 30S pre-initiation complex (PIC). Upon addition of the 50S ribosomal subunit IF-1, IF-2 and IF-3 are released leaving the mature 70S translation initiation complex. The polypeptide is Translation initiation factor IF-1 3 (Burkholderia orbicola (strain AU 1054)).